We begin with the raw amino-acid sequence, 893 residues long: Major vault protein (893 aa).

At Ala-2 the chain carries N-acetylalanine. MVP repeat units lie at residues 2–56, 57–111, 112–164, 165–217, 218–272, 273–323, 324–379, 380–457, and 458–520; these read ATEE…VPPR, HYCT…DITP, LQVV…EIIQ, ATII…DLVD, AVIL…GVVP, ITTL…IQDV, YVLS…ERQA, IPLD…KTRV, and VSYR…LLGP. Lys-444 is covalently cross-linked (Glycyl lysine isopeptide (Lys-Gly) (interchain with G-Cter in SUMO2)). Phosphoserine is present on Ser-445. A Glycyl lysine isopeptide (Lys-Gly) (interchain with G-Cter in SUMO2) cross-link involves residue Lys-704. Residues 856–893 are disordered; sequence QPLGRRVASGPSPGEGISPQSAQAPQAPGDNHVVPVLR.

The vault ribonucleoprotein particle is a huge (400 A x 670 A) cage structure of 12.9 MDa. It consists of a dimer of half-vaults, with each half-vault comprising 39 identical major vault protein (MVP) chains, PARP4 and one or more vault RNAs (vRNAs). Interacts with TEP1. Interacts with PTEN and activated MAPK1. The phosphorylated protein interacts with the SH2 domains of PTPN11 and SRC. Interacts with APEX1. May interact with ZNF540. Phosphorylated on Tyr residues after EGF stimulation. In terms of processing, dephosphorylated by PTPN11. In terms of tissue distribution, present in most normal tissues. Higher expression observed in epithelial cells with secretory and excretory functions, as well as in cells chronically exposed to xenobiotics, such as bronchial cells and cells lining the intestine. Overexpressed in many multidrug-resistant cancer cells.

The protein resides in the cytoplasm. The protein localises to the nucleus. Its subcellular location is the nuclear pore complex. It localises to the perinuclear region. Functionally, required for normal vault structure. Vaults are multi-subunit structures that may act as scaffolds for proteins involved in signal transduction. Vaults may also play a role in nucleo-cytoplasmic transport. Down-regulates IFNG-mediated STAT1 signaling and subsequent activation of JAK. Down-regulates SRC activity and signaling through MAP kinases. The sequence is that of Major vault protein (MVP) from Homo sapiens (Human).